The following is a 374-amino-acid chain: MHSRSALLYRFLRPASRCFSSSSAVTPVTVTQSPKSLEALRARLANESPSLTDFIHGDTYSVEVGTKKKPLPKPKWMKESIPGGERYVQIKKKLRDLKLHTVCEEAKCPNLGECWSGGETGTATATIMILGDTCTRGCRFCNVKTSRTPPPPDPNEPNNVAEAIASWGVDYVVITSVDRDDLPDQGSGHFAETVQRLKFLKPEMLIEALVPDFRGDGGCVEKVSKSGLDVLAHNIETVEELQSFVRDHRANFKQSLDVLRMAKEYAPAGTLTKTSVMLGCGETPDQVVKTMEKVRAAGVDVMTFGQYMRPSKRHMPVAEYVTPDAFERYRLLGMEMGFRYVASGPMVRSSYKAGEYYIKSMIEADRVASPSTSP.

A mitochondrion-targeting transit peptide spans 1–19; it reads MHSRSALLYRFLRPASRCF. Cysteine 103, cysteine 108, cysteine 114, cysteine 134, cysteine 138, cysteine 141, and serine 350 together coordinate [4Fe-4S] cluster. The Radical SAM core domain maps to 119 to 339; the sequence is ETGTATATIM…RLLGMEMGFR (221 aa).

This sequence belongs to the radical SAM superfamily. Lipoyl synthase family. [4Fe-4S] cluster serves as cofactor. In terms of tissue distribution, expressed in leaves and flowers, but not in roots. Expressed in roots, rosette leaves, cauline leaves, stems, flowers and siliques.

It is found in the mitochondrion. The catalysed reaction is [[Fe-S] cluster scaffold protein carrying a second [4Fe-4S](2+) cluster] + N(6)-octanoyl-L-lysyl-[protein] + 2 oxidized [2Fe-2S]-[ferredoxin] + 2 S-adenosyl-L-methionine + 4 H(+) = [[Fe-S] cluster scaffold protein] + N(6)-[(R)-dihydrolipoyl]-L-lysyl-[protein] + 4 Fe(3+) + 2 hydrogen sulfide + 2 5'-deoxyadenosine + 2 L-methionine + 2 reduced [2Fe-2S]-[ferredoxin]. Its pathway is protein modification; protein lipoylation via endogenous pathway; protein N(6)-(lipoyl)lysine from octanoyl-[acyl-carrier-protein]: step 2/2. Catalyzes the radical-mediated insertion of two sulfur atoms into the C-6 and C-8 positions of the octanoyl moiety bound to the lipoyl domains of lipoate-dependent enzymes, thereby converting the octanoylated domains into lipoylated derivatives. Together with LIP2 is essential for mitochondrial protein lipoylation during seed development. Required for the lipoylation of mitochondrial pyruvate dehydrogenase component E2 proteins in leaves and roots. This Arabidopsis thaliana (Mouse-ear cress) protein is Lipoyl synthase, mitochondrial.